The chain runs to 192 residues: Genome polyprotein (192 aa).

The Cytoplasmic segment spans residues 1–52 (RNLGKVIDTLTCGFADLMGYIPLVGAPLGGAARALAHGVRVLEDGVNYATGN). Residues 6-57 (VIDTLTCGFADLMGYIPLVGAPLGGAARALAHGVRVLEDGVNYATGNLPGCS) are interaction with APOA2. An important for lipid droplets localization region spans residues 48–51 (YATG). The helical transmembrane segment at 53 to 73 (LPGCSFSIFLLALLSCLTVPA) threads the bilayer. A propeptide spans 62-75 (LLALLSCLTVPASA) (ER anchor for the core protein, removed in mature form by host signal peptidase). The Lumenal segment spans residues 74 to 192 (SAYQVRNSSG…WTTQGCNCSI (119 aa)). Residues Asn80, Asn93, and Asn118 are each glycosylated (N-linked (GlcNAc...) asparagine; by host). The important for fusion stretch occupies residues 149–180 (LVGSATLCSALYVGDLCGSVFLVGQLFTFSPR). An N-linked (GlcNAc...) asparagine; by host glycan is attached at Asn189.

Belongs to the hepacivirus polyprotein family. In terms of assembly, homooligomer. Interacts with E1 (via C-terminus). Interacts with the non-structural protein 5A. Interacts (via N-terminus) with host STAT1 (via SH2 domain); this interaction results in decreased STAT1 phosphorylation and ubiquitin-mediated proteasome-dependent STAT1 degradation, leading to decreased IFN-stimulated gene transcription. Interacts with host STAT3; this interaction constitutively activates STAT3. Interacts with host LTBR receptor. Interacts with host TNFRSF1A receptor and possibly induces apoptosis. Interacts with host HNRPK. Interacts with host YWHAE. Interacts with host UBE3A/E6AP. Interacts with host DDX3X. Interacts with host APOA2. Interacts with host RXRA protein. Interacts with host SP110 isoform 3/Sp110b; this interaction sequesters the transcriptional corepressor SP110 away from the nucleus. Interacts with host CREB3 nuclear transcription protein; this interaction triggers cell transformation. Interacts with host ACY3. Interacts with host C1QR1. Interacts with host RBM24; this interaction, which enhances the interaction of the mature core protein with 5'-UTR, may inhibit viral translation and favor replication. Interacts with host EIF2AK2/PKR; this interaction induces the autophosphorylation of EIF2AK2. Part of the viral assembly initiation complex composed of NS2, E1, E2, NS3, NS4A, NS5A and the mature core protein. Forms a heterodimer with envelope glycoprotein E2. Interacts with mature core protein. Interacts with protease NS2. The heterodimer E1/E2 interacts with host CLDN1; this interaction plays a role in viral entry into host cell. Interacts with host SPSB2 (via C-terminus). Part of the viral assembly initiation complex composed of NS2, E1, E2, NS3, NS4A, NS5A and the mature core protein. Specific enzymatic cleavages in vivo yield mature proteins. The structural proteins, core, E1, E2 and p7 are produced by proteolytic processing by host signal peptidases. The core protein precursor is synthesized as a 23 kDa, which is retained in the ER membrane through the hydrophobic signal peptide. Cleavage by the signal peptidase releases the 21 kDa mature core protein. The cleavage of the core protein precursor occurs between aminoacids 176 and 188 but the exact cleavage site is not known. Some degraded forms of the core protein appear as well during the course of infection. The other proteins (p7, NS2, NS3, NS4A, NS4B, NS5A and NS5B) are cleaved by the viral proteases. Autoprocessing between NS2 and NS3 is mediated by the NS2 cysteine protease catalytic domain and regulated by the NS3 N-terminal domain. Post-translationally, phosphorylated by host PKC and PKA. In terms of processing, ubiquitinated; mediated by UBE3A and leading to core protein subsequent proteasomal degradation. Highly N-glycosylated.

It is found in the host endoplasmic reticulum membrane. The protein resides in the host mitochondrion membrane. Its subcellular location is the virion. It localises to the host cytoplasm. The protein localises to the host nucleus. It is found in the host lipid droplet. The protein resides in the virion membrane. In terms of biological role, packages viral RNA to form a viral nucleocapsid, and promotes virion budding. Participates in the viral particle production as a result of its interaction with the non-structural protein 5A. Binds RNA and may function as a RNA chaperone to induce the RNA structural rearrangements taking place during virus replication. Modulates viral translation initiation by interacting with viral IRES and 40S ribosomal subunit. Affects various cell signaling pathways, host immunity and lipid metabolism. Prevents the establishment of cellular antiviral state by blocking the interferon-alpha/beta (IFN-alpha/beta) and IFN-gamma signaling pathways and by blocking the formation of phosphorylated STAT1 and promoting ubiquitin-mediated proteasome-dependent degradation of STAT1. Activates STAT3 leading to cellular transformation. Regulates the activity of cellular genes, including c-myc and c-fos. May repress the promoter of p53, and sequester CREB3 and SP110 isoform 3/Sp110b in the cytoplasm. Represses cell cycle negative regulating factor CDKN1A, thereby interrupting an important check point of normal cell cycle regulation. Targets transcription factors involved in the regulation of inflammatory responses and in the immune response: suppresses TNF-induced NF-kappa-B activation, and activates AP-1. Binds to dendritic cells (DCs) via C1QR1, resulting in down-regulation of T-lymphocytes proliferation. Alters lipid metabolism by interacting with hepatocellular proteins involved in lipid accumulation and storage. Induces up-regulation of FAS promoter activity, and thereby contributes to the increased triglyceride accumulation in hepatocytes (steatosis). Forms a heterodimer with envelope glycoprotein E2, which mediates virus attachment to the host cell, virion internalization through clathrin-dependent endocytosis and fusion with host membrane. Fusion with the host cell is most likely mediated by both E1 and E2, through conformational rearrangements of the heterodimer required for fusion rather than a classical class II fusion mechanism. E1/E2 heterodimer binds host apolipoproteins such as APOB and ApoE thereby forming a lipo-viro-particle (LVP). APOE associated to the LVP allows the initial virus attachment to cell surface receptors such as the heparan sulfate proteoglycans (HSPGs), syndecan-1 (SDC1), syndecan-1 (SDC2), the low-density lipoprotein receptor (LDLR) and scavenger receptor class B type I (SCARB1). The cholesterol transfer activity of SCARB1 allows E2 exposure and binding of E2 to SCARB1 and the tetraspanin CD81. E1/E2 heterodimer binding on CD81 activates the epithelial growth factor receptor (EGFR) signaling pathway. Diffusion of the complex E1-E2-EGFR-SCARB1-CD81 to the cell lateral membrane allows further interaction with Claudin 1 (CLDN1) and occludin (OCLN) to finally trigger HCV entry. The polypeptide is Genome polyprotein (Hepatitis C virus (isolate EC1) (HCV)).